Consider the following 159-residue polypeptide: Nucleotide-binding protein PLES_47741 (159 aa).

Belongs to the YajQ family.

In terms of biological role, nucleotide-binding protein. The polypeptide is Nucleotide-binding protein PLES_47741 (Pseudomonas aeruginosa (strain LESB58)).